The primary structure comprises 159 residues: Stress-induced protein 1 (159 aa).

Positions 33–141 (NNFNNIVPQQ…TVRALPIHTS (109 aa)) constitute a sHSP domain.

It belongs to the small heat shock protein (HSP20) family.

This is Stress-induced protein 1 from Caenorhabditis elegans.